Reading from the N-terminus, the 872-residue chain is Alanine--tRNA ligase (872 aa).

The Zn(2+) site is built by histidine 566, histidine 570, cysteine 668, and histidine 672.

This sequence belongs to the class-II aminoacyl-tRNA synthetase family. It depends on Zn(2+) as a cofactor.

It localises to the cytoplasm. It carries out the reaction tRNA(Ala) + L-alanine + ATP = L-alanyl-tRNA(Ala) + AMP + diphosphate. Functionally, catalyzes the attachment of alanine to tRNA(Ala) in a two-step reaction: alanine is first activated by ATP to form Ala-AMP and then transferred to the acceptor end of tRNA(Ala). Also edits incorrectly charged Ser-tRNA(Ala) and Gly-tRNA(Ala) via its editing domain. This Lactococcus lactis subsp. lactis (strain IL1403) (Streptococcus lactis) protein is Alanine--tRNA ligase.